The sequence spans 367 residues: Protein RIC-3 (367 aa).

The signal sequence occupies residues 1–31 (MAYSTVQRVALASGLVLAVSLLLPKAFLSRG). Residues 30–67 (RGKRPEPPPGPEGKLDRFPPMMHHHSAPSDGQTPGARF) are disordered. Topologically, residues 32–95 (KRPEPPPGPE…AGGGGSGRGL (64 aa)) are lumenal. A helical transmembrane segment spans residues 96–116 (MGQIIPIYGFGIFLYILYILF). The Cytoplasmic portion of the chain corresponds to 117–367 (KLSKGKTAED…LRKRNPQGFE (251 aa)). Residues 138–169 (HRKITNFELVQLQEKLKETEEAMEKLINRVGP) are a coiled coil. Lys-201 carries the post-translational modification N6-acetyllysine; alternate. Residue Lys-201 forms a Glycyl lysine isopeptide (Lys-Gly) (interchain with G-Cter in ubiquitin); alternate linkage. Disordered stretches follow at residues 262–301 (QMGEIEEEGSERLSWDHLPTDPGAQKDNSVAPCDPKPESC) and 322–367 (ADGY…QGFE). Positions 271-280 (SERLSWDHLP) are enriched in basic and acidic residues. Positions 358–367 (LRKRNPQGFE) are enriched in basic residues.

Belongs to the ric-3 family. In terms of assembly, monomer and homodimer. Interacts with CHRNA7, CHRNA3, CHRNA4, CHRNB2, CHRNB4 and HTR3A. In terms of tissue distribution, expressed in brain, with highest levels in hippocampus, cerebellum and superior colliculus.

The protein resides in the endoplasmic reticulum membrane. Molecular chaperone which promotes the proper subunit assembly and surface trafficking of alpha-7 (CHRNA7) nicotinic acetylcholine receptor. Promotes the proper subunit assembly and cell surface expression of alpha-8 (CHRNA8) nicotinic acetylcholine receptor. May also promote functional expression of homomeric serotoninergic 5-HT3 receptors, and of heteromeric acetylcholine receptors alpha-3/beta-2, alpha-3/beta-4, alpha-4/beta-2 and alpha-4/beta-4. In Mus musculus (Mouse), this protein is Protein RIC-3 (Ric3).